The sequence spans 190 residues: Bifunctional protein PyrR (190 aa).

The short motif at 107 to 119 (IILVDDVLYSGRT) is the PRPP-binding element.

This sequence belongs to the purine/pyrimidine phosphoribosyltransferase family. PyrR subfamily.

It catalyses the reaction UMP + diphosphate = 5-phospho-alpha-D-ribose 1-diphosphate + uracil. Its function is as follows. Regulates the transcription of the pyrimidine nucleotide (pyr) operon in response to exogenous pyrimidines. Also displays a weak uracil phosphoribosyltransferase activity which is not physiologically significant. This Corynebacterium diphtheriae (strain ATCC 700971 / NCTC 13129 / Biotype gravis) protein is Bifunctional protein PyrR.